We begin with the raw amino-acid sequence, 271 residues long: MLPTVFIVSDGTGITAETFAHSILSQFDQKFRLVRVPFVDSLEKAYATVEKINEAAVHDGRRSIVFTTLVDSESNEIVKRSNALVLDMFQRFVEPLEQELQLKSSHAMGRGHQNADTEEYKTRIEAINFSLAHDDGQSNRNLSEADVILVGVSRSGKTPTSLYLAMQYGVKAANYPLIPEDFERGKLPSALAPHRDKLFGLSIDPQRLSEIRNERRPGSKYAAPENCRYEINEAEAMMRREGIKWLSSTHKSIEEIATTILQEIRLERQSY.

151–158 (GVSRSGKT) is an ADP binding site.

The protein belongs to the pyruvate, phosphate/water dikinase regulatory protein family. PSRP subfamily.

The catalysed reaction is [pyruvate, water dikinase] + ADP = [pyruvate, water dikinase]-phosphate + AMP + H(+). The enzyme catalyses [pyruvate, water dikinase]-phosphate + phosphate + H(+) = [pyruvate, water dikinase] + diphosphate. In terms of biological role, bifunctional serine/threonine kinase and phosphorylase involved in the regulation of the phosphoenolpyruvate synthase (PEPS) by catalyzing its phosphorylation/dephosphorylation. The sequence is that of Putative phosphoenolpyruvate synthase regulatory protein from Burkholderia multivorans (strain ATCC 17616 / 249).